The primary structure comprises 367 residues: Probable butyrate kinase (367 aa).

Belongs to the acetokinase family.

The protein resides in the cytoplasm. The catalysed reaction is butanoate + ATP = butanoyl phosphate + ADP. This chain is Probable butyrate kinase, found in Bacillus cereus (strain Q1).